A 174-amino-acid chain; its full sequence is Ribosome maturation factor RimM (174 aa).

In terms of domain architecture, PRC barrel spans 91 to 164 (DDAWYPHQLQ…KVVLSPPGGL (74 aa)).

The protein belongs to the RimM family. In terms of assembly, binds ribosomal protein uS19.

It is found in the cytoplasm. Functionally, an accessory protein needed during the final step in the assembly of 30S ribosomal subunit, possibly for assembly of the head region. Essential for efficient processing of 16S rRNA. May be needed both before and after RbfA during the maturation of 16S rRNA. It has affinity for free ribosomal 30S subunits but not for 70S ribosomes. The chain is Ribosome maturation factor RimM from Kineococcus radiotolerans (strain ATCC BAA-149 / DSM 14245 / SRS30216).